A 52-amino-acid chain; its full sequence is Lantibiotic gallidermin (52 aa).

Residues 1-30 (MEAVKEKNELFDLDVKVNAKESNDSGAEPR) constitute a propeptide that is removed on maturation. A cross-link (lanthionine (Ser-Cys)) is located at residues 33–37 (SKFLC). The segment at residues 38–41 (TPGC) is a cross-link (beta-methyllanthionine (Thr-Cys)). T44 carries the (Z)-2,3-didehydrobutyrine modification. The lanthionine (Ser-Cys) cross-link spans 46 to 51 (SFNSYC). The S-(2-aminovinyl)-D-cysteine (Ser-Cys) cross-link spans 49–52 (SYCC).

This sequence belongs to the type A lantibiotic family. Post-translationally, maturation of lantibiotics involves the enzymatic conversion of Thr, and Ser into dehydrated AA and the formation of thioether bonds with cysteine. The C-terminal lanthionine undergoes decarboxylation. This is followed by membrane translocation and cleavage of the modified precursor. In terms of processing, the structure of the 2,3-didehydrobutyrine is not discussed in PubMed:1932575. However, in Fig. 5 the NMR model appears to have the Z-isomer.

In terms of biological role, lanthionine-containing peptide antibiotic (lantibiotic) active on Gram-positive bacteria. The bactericidal activity of lantibiotics is based on depolarization of energized bacterial cytoplasmic membranes, initiated by the formation of aqueous transmembrane pores. The sequence is that of Lantibiotic gallidermin (gdmA) from Staphylococcus gallinarum.